The following is a 520-amino-acid chain: Chaperone Ric-8B (520 aa).

The residue at position 468 (S468) is a Phosphoserine. Residue T473 is modified to Phosphothreonine.

Belongs to the synembryn family. In terms of assembly, interacts with GDP-bound G(s) G-alpha proteins GNAL and GNAS. Does not interact with G-alpha proteins when they are in complex with subunits beta and gamma.

It localises to the cytoplasm. The protein resides in the cell cortex. Chaperone that specifically binds and folds nascent G(s) G-alpha proteins (GNAS and GNAL) prior to G protein heterotrimer formation, promoting their association with the plasma membrane. Also acts as a guanine nucleotide exchange factor (GEF) for G(s) proteins by stimulating exchange of bound GDP for free GTP. Acts as an important component for odorant signal transduction by mediating GNAL (G(olf)-alpha) folding, thereby promoting-dependent cAMP accumulation in olfactory sensory neurons. This is Chaperone Ric-8B (Ric8b) from Rattus norvegicus (Rat).